A 255-amino-acid polypeptide reads, in one-letter code: uncharacterized protein (255 aa).

Disordered stretches follow at residues 112–145 (CWPG…PSPG) and 157–183 (GLAE…PDAQ).

This is an uncharacterized protein from Rhodospirillum rubrum.